The sequence spans 177 residues: Ribosome maturation factor RimM (177 aa).

The 75-residue stretch at 92–166 (EDTFYHADLM…RIVVVPDTNP (75 aa)) folds into the PRC barrel domain.

This sequence belongs to the RimM family. Binds ribosomal protein uS19.

It is found in the cytoplasm. An accessory protein needed during the final step in the assembly of 30S ribosomal subunit, possibly for assembly of the head region. Essential for efficient processing of 16S rRNA. May be needed both before and after RbfA during the maturation of 16S rRNA. It has affinity for free ribosomal 30S subunits but not for 70S ribosomes. The protein is Ribosome maturation factor RimM of Azorhizobium caulinodans (strain ATCC 43989 / DSM 5975 / JCM 20966 / LMG 6465 / NBRC 14845 / NCIMB 13405 / ORS 571).